A 959-amino-acid chain; its full sequence is UPF0182 protein MAE_41360 (959 aa).

9 helical membrane passes run 13-33 (PILL…VVAN), 50-70 (LSWQ…FIFT), 99-119 (LLGL…MLLY), 156-176 (DISS…GLLI), 184-204 (IISI…WANF), 239-259 (LWLT…YLFS), 276-296 (LRHL…HHII), 319-339 (VGQF…IWLG), and 362-382 (FFPY…GTII).

Belongs to the UPF0182 family.

Its subcellular location is the cell membrane. The sequence is that of UPF0182 protein MAE_41360 from Microcystis aeruginosa (strain NIES-843 / IAM M-2473).